The following is a 357-amino-acid chain: MGNSSCCLRTRSSSGEDKSYNNDGQYIRTNQVEFQYVNQVFPRDETSTNFLPHISEREVTEGYEEDPSTNPTARPTFMERSKSEMKLKDNRRSCYMLDALAAGGHHPGILPRSLRKSSSCSTIYIDDSTVSQPHLKNTIKCISLAIYYHISNRKNRGHERLMEIFEERLHPIFRDPIPPEQMTRDPDHRNIYRFVRNLFSSAQLTAECAIITLVYIERLLNYAEMDLCPSNWRRVVLGSIMLASKVWDDQAVWNVDYCQILRDTNVDDMNELERRFLECLDFNIEVPSSVYAKYYFDLRTLALANDLQLPIQPLYKERAQRLEALSRVFEDKIQSSSLPKRARSAEHLVFEHPAVLS.

Over residues 1–13 (MGNSSCCLRTRSS) the composition is skewed to polar residues. The disordered stretch occupies residues 1-23 (MGNSSCCLRTRSSSGEDKSYNND). A Cyclin N-terminal domain is found at 186 to 284 (PDHRNIYRFV…RFLECLDFNI (99 aa)).

This sequence belongs to the cyclin family. As to quaternary structure, interacts with pct-1; the interaction is required to activate pct-1.

Its subcellular location is the cytoplasm. The protein resides in the cell projection. It is found in the dendrite. It localises to the axon. Its function is as follows. In association with pct-1, regulates the trafficking of synaptic vesicle precursors in DA motor neurons by promoting anterograde trafficking to the axon and preventing dynein-dependent trafficking to the dendrite. May also regulate synaptic vesicle trafficking in DD motor neurons and in RIA interneurons. Involved in synapse formation during DD motor neuron remodeling by disassembling ventral presynaptic structures. May activate cdk-5. The protein is Cyclin-Y of Caenorhabditis elegans.